The following is a 229-amino-acid chain: Putative N-acetylmannosamine-6-phosphate 2-epimerase (229 aa).

This sequence belongs to the NanE family.

It catalyses the reaction an N-acyl-D-glucosamine 6-phosphate = an N-acyl-D-mannosamine 6-phosphate. It functions in the pathway amino-sugar metabolism; N-acetylneuraminate degradation; D-fructose 6-phosphate from N-acetylneuraminate: step 3/5. Functionally, converts N-acetylmannosamine-6-phosphate (ManNAc-6-P) to N-acetylglucosamine-6-phosphate (GlcNAc-6-P). This Shigella dysenteriae serotype 1 (strain Sd197) protein is Putative N-acetylmannosamine-6-phosphate 2-epimerase.